We begin with the raw amino-acid sequence, 82 residues long: uncharacterized protein (82 aa).

2 helical membrane passes run 32–52 and 59–79; these read PFSI…IGIL and SKPL…FNII.

The protein localises to the cell membrane. This is an uncharacterized protein from Rickettsia prowazekii (strain Madrid E).